A 317-amino-acid polypeptide reads, in one-letter code: Type II methyltransferase M.MgeORF184P (317 aa).

This sequence belongs to the N(4)/N(6)-methyltransferase family.

The catalysed reaction is a 2'-deoxyadenosine in DNA + S-adenosyl-L-methionine = an N(6)-methyl-2'-deoxyadenosine in DNA + S-adenosyl-L-homocysteine + H(+). Functionally, probably recognizes the double-stranded sequence 5'-CTAT-3' and methylates A-3 on only one strand; as the bacterial DNA is methylated on this sequence and this is the only type II methylase in the genome, it is probably responsible for all of the methylation on this site in the genome. In Mycoplasma genitalium (strain ATCC 33530 / DSM 19775 / NCTC 10195 / G37) (Mycoplasmoides genitalium), this protein is Type II methyltransferase M.MgeORF184P.